Here is a 602-residue protein sequence, read N- to C-terminus: Sulfite reductase [NADPH] hemoprotein beta-component (602 aa).

The segment covering 1–15 has biased composition (basic and acidic residues); the sequence is MDDHKTASPPRERSY. A disordered region spans residues 1–24; the sequence is MDDHKTASPPRERSYETPPAERPI. [4Fe-4S] cluster is bound by residues cysteine 458, cysteine 464, cysteine 503, and cysteine 507. A siroheme-binding site is contributed by cysteine 507.

The protein belongs to the nitrite and sulfite reductase 4Fe-4S domain family. In terms of assembly, alpha(8)-beta(8). The alpha component is a flavoprotein, the beta component is a hemoprotein. Requires siroheme as cofactor. The cofactor is [4Fe-4S] cluster.

The catalysed reaction is hydrogen sulfide + 3 NADP(+) + 3 H2O = sulfite + 3 NADPH + 4 H(+). The protein operates within sulfur metabolism; hydrogen sulfide biosynthesis; hydrogen sulfide from sulfite (NADPH route): step 1/1. In terms of biological role, component of the sulfite reductase complex that catalyzes the 6-electron reduction of sulfite to sulfide. This is one of several activities required for the biosynthesis of L-cysteine from sulfate. In Methylobacterium nodulans (strain LMG 21967 / CNCM I-2342 / ORS 2060), this protein is Sulfite reductase [NADPH] hemoprotein beta-component.